The chain runs to 186 residues: Bilin biosynthesis protein CpeZ (186 aa).

Involved in the biosynthesis of bilin. This chain is Bilin biosynthesis protein CpeZ (cpeZ), found in Synechococcus sp. (strain WH8020).